Reading from the N-terminus, the 1153-residue chain is Myosin-3 (1153 aa).

One can recognise a Myosin N-terminal SH3-like domain in the interval 104-153; that stretch reads KKVLQFWVQLPNGNWELGKIMSTSGEESVIVVTEGKVLKVKSETLVPANP. The Myosin motor domain maps to 157 to 829; it reads DGVDDLMQLS…QIGVLEDTRN (673 aa). Residues 248–255 and 296–304 each bind ATP; these read GESGAGKT and NDNSSRFGK. Actin-binding stretches follow at residues 581 to 615 and 709 to 731; these read LFEK…KQHL and LFQL…KPNN. 3 IQ domains span residues 831-860, 854-883, and 903-932; these read TLHG…GITI, LKTG…RHRA, and TVDA…LSSG. The stretch at 948 to 996 forms a coiled coil; the sequence is YLSDLQRRVLRTEAALREKEEENDILRQRVQQYDNRWSEYETKMKSMEE. Residues 1020 to 1050 form a disordered region; sequence DSARNSDASVNASDATDLDSGGSHYQMGHGR. Polar residues predominate over residues 1024–1033; sequence NSDASVNASD.

Belongs to the TRAFAC class myosin-kinesin ATPase superfamily. Myosin family. Plant myosin class VIII subfamily. Homodimer.

Myosin heavy chain that is required for the cell cycle-regulated transport of various organelles and proteins for their segregation. Functions by binding with its tail domain to receptor proteins on organelles and exerting force with its N-terminal motor domain against actin filaments, thereby transporting its cargo along polarized actin cables. This is Myosin-3 (VIII-A) from Arabidopsis thaliana (Mouse-ear cress).